A 453-amino-acid polypeptide reads, in one-letter code: GTPase Der (453 aa).

2 EngA-type G domains span residues 3 to 167 (PIIV…ISEK) and 187 to 360 (IKVA…EDSK). GTP-binding positions include 9–16 (GRTNVGKS), 57–61 (DTAGL), 119–122 (NKID), 193–200 (GRPNVGKS), 240–244 (DTAGA), and 305–308 (NKCD). The region spanning 361 to 445 (RKISTSTLIR…PIQIQFKDNE (85 aa)) is the KH-like domain.

The protein belongs to the TRAFAC class TrmE-Era-EngA-EngB-Septin-like GTPase superfamily. EngA (Der) GTPase family. In terms of assembly, associates with the 50S ribosomal subunit.

GTPase that plays an essential role in the late steps of ribosome biogenesis. This Buchnera aphidicola subsp. Acyrthosiphon pisum (strain Tuc7) protein is GTPase Der.